A 49-amino-acid chain; its full sequence is Large ribosomal subunit protein bL33A (49 aa).

Belongs to the bacterial ribosomal protein bL33 family.

The chain is Large ribosomal subunit protein bL33A from Bacillus cytotoxicus (strain DSM 22905 / CIP 110041 / 391-98 / NVH 391-98).